The sequence spans 97 residues: MNNLPATPSPEELMTTPVFQAPETLSPQAEEASTALIAVVITVVFLTLLSVVTLIFFHLYKNKGSYVTYEPAEGEPSAILQMETDSAKGREKEEYFI.

At 1-36 (MNNLPATPSPEELMTTPVFQAPETLSPQAEEASTAL) the chain is on the extracellular side. Residue Thr7 is glycosylated (O-linked (GalNAc...) threonine). The O-linked (GalNAc...) serine glycan is linked to Ser9. O-linked (GalNAc...) threonine glycans are attached at residues Thr15, Thr16, and Thr24. The O-linked (GalNAc...) serine glycan is linked to Ser26. Residues 37-57 (IAVVITVVFLTLLSVVTLIFF) traverse the membrane as a helical; Signal-anchor for type III membrane protein segment. Over 58–97 (HLYKNKGSYVTYEPAEGEPSAILQMETDSAKGREKEEYFI) the chain is Cytoplasmic.

The protein belongs to the SMAGP family. In terms of processing, O-glycosylated. The O-glycan is modified with sialic acid residues.

The protein localises to the cell membrane. Its subcellular location is the cytoplasmic vesicle membrane. In terms of biological role, may play a role in epithelial cell-cell contacts. May play a role in tumor invasiveness and metastasis formation. This chain is Small cell adhesion glycoprotein (Smagp), found in Mus musculus (Mouse).